Here is a 172-residue protein sequence, read N- to C-terminus: Adenine phosphoribosyltransferase (172 aa).

Belongs to the purine/pyrimidine phosphoribosyltransferase family. In terms of assembly, homodimer.

It is found in the cytoplasm. The enzyme catalyses AMP + diphosphate = 5-phospho-alpha-D-ribose 1-diphosphate + adenine. The protein operates within purine metabolism; AMP biosynthesis via salvage pathway; AMP from adenine: step 1/1. Catalyzes a salvage reaction resulting in the formation of AMP, that is energically less costly than de novo synthesis. The chain is Adenine phosphoribosyltransferase from Prochlorococcus marinus (strain MIT 9211).